Reading from the N-terminus, the 213-residue chain is Octanoyltransferase (213 aa).

One can recognise a BPL/LPL catalytic domain in the interval 32-207; that stretch reads DHTPDEIWLV…KLLALLNNPP (176 aa). Residues 71–78, 138–140, and 151–153 contribute to the substrate site; these read RGGQVTYH, SLG, and GLA. The Acyl-thioester intermediate role is filled by C169.

Belongs to the LipB family.

Its subcellular location is the cytoplasm. The enzyme catalyses octanoyl-[ACP] + L-lysyl-[protein] = N(6)-octanoyl-L-lysyl-[protein] + holo-[ACP] + H(+). Its pathway is protein modification; protein lipoylation via endogenous pathway; protein N(6)-(lipoyl)lysine from octanoyl-[acyl-carrier-protein]: step 1/2. In terms of biological role, catalyzes the transfer of endogenously produced octanoic acid from octanoyl-acyl-carrier-protein onto the lipoyl domains of lipoate-dependent enzymes. Lipoyl-ACP can also act as a substrate although octanoyl-ACP is likely to be the physiological substrate. This is Octanoyltransferase from Enterobacter sp. (strain 638).